Here is a 1481-residue protein sequence, read N- to C-terminus: Cystic fibrosis transmembrane conductance regulator (1481 aa).

The Cytoplasmic portion of the chain corresponds to 1-77 (MQRSPLEKAS…KLINALRRCF (77 aa)). A helical transmembrane segment spans residues 78-98 (FWRFMFYGIILYLGEVTKAVQ). Residues 81–365 (FMFYGIILYL…WAVQTWYDSL (285 aa)) form the ABC transmembrane type-1 1 domain. The Extracellular portion of the chain corresponds to 99-122 (PLLLGRIIASYDPDNKVERSIAIY). The helical transmembrane segment at 123-146 (LGIGLCLLFIVRTLLLHPAIFGLH) threads the bilayer. The Cytoplasmic portion of the chain corresponds to 147–195 (HIGMQMRIAMFSLIYKKTLKLSSRVLDKISIGQLVSLLSNNLNKFDEGL). Residues 196 to 216 (ALAHFVWIAPLQVTLLMGLLW) form a helical membrane-spanning segment. At 217 to 222 (ELLQAF) the chain is on the extracellular side. Residues 223–243 (TFCGLAFLIVLALLQAGLGKM) traverse the membrane as a helical segment. At 244–298 (MMKYRDQRAGKINERLVITSEMIENIQSVKAYCWEEAMEKIIENLRQTELKLTRK) the chain is on the cytoplasmic side. A helical transmembrane segment spans residues 299 to 319 (AAYVRYLNSSAFFFSGFFVVF). Residues 320-339 (LSVLPYALLKGIILRKIFTT) lie on the Extracellular side of the membrane. The chain crosses the membrane as a helical span at residues 340 to 358 (ISFCIVLRMAVTRQFPWAV). At 359–858 (QTWYDSLGAI…YLRYITVHKS (500 aa)) the chain is on the cytoplasmic side. ATP is bound by residues Trp401, 457 to 464 (GSTGAGKT), and Gln492. The region spanning 423 to 645 (NGDNSLFFSN…RPDFSSKLMG (223 aa)) is the ABC transporter 1 domain. Cys523 carries S-palmitoyl cysteine lipidation. Ser548 carries the post-translational modification Phosphoserine. The tract at residues 653–831 (TAERRNSIIT…EEINEEDLRD (179 aa)) is disordered R region. Phosphoserine; by PKA occurs at positions 659 and 669. Phosphoserine; by PKC is present on Ser685. Residue Lys687 forms a Glycyl lysine isopeptide (Lys-Gly) (interchain with G-Cter in ubiquitin) linkage. Ser699 bears the Phosphoserine; by PKA mark. Ser711 is subject to Phosphoserine. At Thr716 the chain carries Phosphothreonine. Phosphoserine; by PKA is present on residues Ser736 and Ser767. Ser790 is modified (phosphoserine; by PKC). Residues Ser795 and Ser813 each carry the phosphoserine; by PKA modification. A helical transmembrane segment spans residues 859-879 (LMFVLIWCLVVFLVEVAASLV). One can recognise an ABC transmembrane type-1 2 domain in the interval 859-1155 (LMFVLIWCLV…AVNSSIDVDS (297 aa)). At 880-918 (VLCLFPKIFFQDKGNSTKSANNSYAVIITSTSSYYIFYI) the chain is on the extracellular side. N-linked (GlcNAc...) asparagine glycosylation is found at Asn894 and Asn900. The discontinuously helical transmembrane segment at 919–939 (YVGVADTLLALGLFRGLPLVH) threads the bilayer. The Cytoplasmic segment spans residues 940-990 (TLITVSKTLHHKMLQSVLQAPMSTLNTLKTGGILNRFSKDIAVLDDLLPLT). A helical transmembrane segment spans residues 991–1011 (IFDFVQLLLIVIGAVVVVSVL). At 1012-1013 (QP) the chain is on the extracellular side. The helical transmembrane segment at 1014–1034 (YIFLATVPVIAAFILLRAYFL) threads the bilayer. The Cytoplasmic segment spans residues 1035–1095 (HTSQQLKQLE…TANWFLYLST (61 aa)). A helical membrane pass occupies residues 1096–1116 (LRWFQMRIEMIFVIFFIAVTF). Residues 1117 to 1130 (ISILTTGEGEGRVG) lie on the Extracellular side of the membrane. Residues 1131-1151 (IILTLAMNIMGTLQWAVNSSI) form a helical membrane-spanning segment. Over 1152-1481 (DVDSLMRSVS…TEEEVQETKL (330 aa)) the chain is Cytoplasmic. Positions 1211–1444 (MTVKDLTAKY…KSLFRQAISP (234 aa)) constitute an ABC transporter 2 domain. Residues Tyr1220 and 1245–1252 (GRTGSGKS) each bind ATP. Positions 1387-1481 (RTLKQAFANC…TEEEVQETKL (95 aa)) are interaction with GORASP2. Residue Cys1396 is the site of S-palmitoyl cysteine attachment. Residues 1453-1481 (HRNSSRQRSRSNIAALKEETEEEVQETKL) are disordered. Ser1457 carries the phosphoserine modification. The span at 1471-1481 (ETEEEVQETKL) shows a compositional bias: acidic residues. The PDZ-binding motif lies at 1479-1481 (TKL).

The protein belongs to the ABC transporter superfamily. ABCC family. CFTR transporter (TC 3.A.1.202) subfamily. In terms of assembly, monomer; does not require oligomerization for channel activity. May form oligomers in the membrane. Interacts with SLC26A3, SLC26A6 and NHERF1. Interacts with SHANK2. Interacts with MYO6. Interacts (via C-terminus) with GOPC (via PDZ domain); this promotes CFTR internalization and thereby decreases channel activity. Interacts with SLC4A7 through NHERF1. Found in a complex with MYO5B and RAB11A. Interacts with ANO1. Interacts with SLC26A8. Interacts with AHCYL1; the interaction increases CFTR activity. Interacts with CSE1L. The core-glycosylated form interacts with GORASP2 (via PDZ GRASP-type 1 domain) in respone to ER stress. Interacts with MARCHF2; the interaction leads to CFTR ubiqtuitination and degradation. Interacts with ADGRG2. N-glycosylated. In terms of processing, phosphorylated; cAMP treatment promotes phosphorylation and activates the channel. Dephosphorylation decreases the ATPase activity (in vitro). Phosphorylation at PKA sites activates the channel. Phosphorylation at PKC sites enhances the response to phosphorylation by PKA. Phosphorylated by AMPK; this inhibits channel activity. Post-translationally, ubiquitinated, leading to its degradation in the lysosome. Deubiquitination by USP10 in early endosomes enhances its endocytic recycling to the cell membrane. Ubiquitinated by RNF185 during ER stress. Ubiquitinated by MARCHF2.

It is found in the apical cell membrane. Its subcellular location is the early endosome membrane. The protein localises to the cell membrane. It localises to the recycling endosome membrane. The protein resides in the endoplasmic reticulum membrane. It is found in the nucleus. It carries out the reaction ATP + H2O + closed Cl(-) channel = ADP + phosphate + open Cl(-) channel.. The catalysed reaction is chloride(in) = chloride(out). The enzyme catalyses hydrogencarbonate(in) = hydrogencarbonate(out). It catalyses the reaction ATP + H2O = ADP + phosphate + H(+). Functionally, epithelial ion channel that plays an important role in the regulation of epithelial ion and water transport and fluid homeostasis. Mediates the transport of chloride ions across the cell membrane. Possesses an intrinsic ATPase activity and utilizes ATP to gate its channel; the passive flow of anions through the channel is gated by cycles of ATP binding and hydrolysis by the ATP-binding domains. The ion channel is also permeable to HCO(3)(-); selectivity depends on the extracellular chloride concentration. Exerts its function also by modulating the activity of other ion channels and transporters. Contributes to the regulation of the pH and the ion content of the epithelial fluid layer. Modulates the activity of the epithelial sodium channel (ENaC) complex, in part by regulating the cell surface expression of the ENaC complex. May regulate bicarbonate secretion and salvage in epithelial cells by regulating the transporter SLC4A7. Can inhibit the chloride channel activity of ANO1. Plays a role in the chloride and bicarbonate homeostasis during sperm epididymal maturation and capacitation. This chain is Cystic fibrosis transmembrane conductance regulator, found in Bos taurus (Bovine).